Reading from the N-terminus, the 222-residue chain is uncharacterized protein (222 aa).

Glycine 2 is lipidated: N-myristoyl glycine; by host.

This sequence belongs to the mimivirus R683/R861 family.

This is an uncharacterized protein from Acanthamoeba polyphaga mimivirus (APMV).